The sequence spans 365 residues: Flagellar P-ring protein (365 aa).

The N-terminal stretch at 1-21 is a signal peptide; it reads MIKRIISIVFLLLTLPQLALA.

Belongs to the FlgI family. In terms of assembly, the basal body constitutes a major portion of the flagellar organelle and consists of four rings (L,P,S, and M) mounted on a central rod.

Its subcellular location is the periplasm. It is found in the bacterial flagellum basal body. In terms of biological role, assembles around the rod to form the L-ring and probably protects the motor/basal body from shearing forces during rotation. The polypeptide is Flagellar P-ring protein (Geobacter metallireducens (strain ATCC 53774 / DSM 7210 / GS-15)).